A 213-amino-acid chain; its full sequence is tRNA (guanine-N(7)-)-methyltransferase (213 aa).

Positions 38, 63, 91, and 113 each coordinate S-adenosyl-L-methionine. D113 is a catalytic residue. Substrate contacts are provided by residues K117, D149, and 192–195; that span reads TEYE.

The protein belongs to the class I-like SAM-binding methyltransferase superfamily. TrmB family.

The enzyme catalyses guanosine(46) in tRNA + S-adenosyl-L-methionine = N(7)-methylguanosine(46) in tRNA + S-adenosyl-L-homocysteine. Its pathway is tRNA modification; N(7)-methylguanine-tRNA biosynthesis. Its function is as follows. Catalyzes the formation of N(7)-methylguanine at position 46 (m7G46) in tRNA. This is tRNA (guanine-N(7)-)-methyltransferase from Mycoplasmoides gallisepticum (strain R(low / passage 15 / clone 2)) (Mycoplasma gallisepticum).